Reading from the N-terminus, the 164-residue chain is Diphosphoinositol polyphosphate phosphohydrolase 3-beta (164 aa).

Residues Arg9, 17 to 19 (KKR), and 38 to 40 (SSR) each bind substrate. The region spanning 17 to 144 (KKRAACLCFR…VHAEYLEKLK (128 aa)) is the Nudix hydrolase domain. Mg(2+) contacts are provided by Gly49 and Glu65. Residues 50 to 71 (GGMEPEEEPGGAAVREVYEEAG) carry the Nudix box motif. The Proton acceptor role is filled by Glu68. Residue Glu69 coordinates Mg(2+). Substrate-binding positions include 89–91 (RKH), Arg115, and Lys133. The segment at 144 to 164 (KLGGSPTNGNSMAPSSPDSDP) is disordered. Residues 148–164 (SPTNGNSMAPSSPDSDP) are compositionally biased toward polar residues.

It belongs to the Nudix hydrolase family. DIPP subfamily. The cofactor is Mg(2+). Mn(2+) is required as a cofactor. In terms of tissue distribution, mainly expressed in testis and, at lower level in brain. According to PubMed:12121577, it is also expressed in pancreas and weakly expressed in thymus, prostate, ovary, lung, small intestine and heart.

Its subcellular location is the cytoplasm. It catalyses the reaction diphospho-myo-inositol polyphosphate + H2O = myo-inositol polyphosphate + phosphate.. The enzyme catalyses P(1),P(6)-bis(5'-adenosyl) hexaphosphate + H2O = adenosine 5'-pentaphosphate + AMP + 2 H(+). The catalysed reaction is P(1),P(5)-bis(5'-adenosyl) pentaphosphate + H2O = adenosine 5'-tetraphosphate + AMP + 2 H(+). Functionally, cleaves a beta-phosphate from the diphosphate groups in PP-InsP5 (diphosphoinositol pentakisphosphate), suggesting that it may play a role in signal transduction. Also able to catalyze the hydrolysis of dinucleoside oligophosphates, with Ap6A and Ap5A being the preferred substrates. The major reaction products are ADP and p4a from Ap6A and ADP and ATP from Ap5A. Also able to hydrolyze 5-phosphoribose 1-diphosphate. This is Diphosphoinositol polyphosphate phosphohydrolase 3-beta from Homo sapiens (Human).